The sequence spans 588 residues: MAVSVFSGVRLLSIGDANGDIQRHSEQQPLRLEIKMNQDAAQIILSNNEETCVFKCTVLRETECSRVGKQSFIITLGCNSVLLQFASPADFSSFYNLLKICRGQKGDRSVFSDRTEESSAVQYFQFYGYLSQQQNMMQDYVRTGTYQRAILQNHTDFKDKVVLDVGCGSGILSFFAAQAGARKVYAVEASTMAQHAEVLVNSNRLSERVVVIPGKVEEVSLPEQVDIIISEPMGYMLFNERMLESYLHAKKFLKPSGKMFPTIGDVHLAPFTDEQLYMEQFTKANFWYQPSFHGVDLSALRGAAVDEYFRQPIVDTFDIRILMAKSVKYTVNFLEAKEEDLYKIEIPFKFHMMHSGLVHGLAFWFDVAFIGSVMTVWLSTAPTEPLTHWYQVRCLLQSPLFAKAGDTMSGTALLIANKRQSYDISIVAQVDQTGSKSSNLLDLKNPFFRYTGTTPAPPPGSHYSSPSENMWNTGGTYSMSQGMAVSGMPTAYDLSTVIGGSGTTVSHNNLIPLGTDTHALNTGIVNHTHSRMGSIMSTGIVQGATTAQQGPSSASLHYPVTNQFTMGGPAISMASPMAIPSNTMHYGS.

Residues 120–427 (AVQYFQFYGY…KRQSYDISIV (308 aa)) enclose the SAM-dependent MTase PRMT-type domain. S-adenosyl-L-methionine contacts are provided by Q133, R142, G166, E188, E217, and S245. Residues 473-588 (TGGTYSMSQG…IPSNTMHYGS (116 aa)) form a transactivation domain region.

Belongs to the class I-like SAM-binding methyltransferase superfamily. Protein arginine N-methyltransferase family. Homodimer.

The protein localises to the nucleus. The protein resides in the cytoplasm. Its subcellular location is the chromosome. The enzyme catalyses L-arginyl-[protein] + 2 S-adenosyl-L-methionine = N(omega),N(omega)-dimethyl-L-arginyl-[protein] + 2 S-adenosyl-L-homocysteine + 2 H(+). Functionally, methylates (mono- and asymmetric dimethylation) the guanidino nitrogens of arginyl residues in several proteins involved in DNA packaging, transcription regulation, pre-mRNA splicing, and mRNA stability. Recruited to promoters upon gene activation together with histone acetyltransferases from EP300/P300 and p160 families, methylates histone H3 at 'Arg-17' (H3R17me) and activates transcription via chromatin remodeling. The sequence is that of Histone-arginine methyltransferase CARM1 (carm1) from Danio rerio (Zebrafish).